The chain runs to 829 residues: Periplasmic nitrate reductase (829 aa).

The tat-type signal signal peptide spans 1–29 (MKMTRRAFVKANAAASAAAVAGITLPASA). One can recognise a 4Fe-4S Mo/W bis-MGD-type domain in the interval 41–97 (ITWDKAPCRFCGTGCSVLVGTQNGKVVATQGDPEAPVNKGLNCIKGYFLSKIMYGQD). Cysteine 48, cysteine 51, cysteine 55, and cysteine 83 together coordinate [4Fe-4S] cluster. Mo-bis(molybdopterin guanine dinucleotide) contacts are provided by residues lysine 85, glutamine 152, asparagine 177, cysteine 181, 214 to 221 (WGSNMAEM), 245 to 249 (STYYH), 264 to 266 (QSD), methionine 374, glutamine 378, asparagine 484, 510 to 511 (SD), lysine 533, aspartate 560, and 718 to 727 (TGRVLEHWHT). Phenylalanine 794 serves as a coordination point for substrate. Residues asparagine 802 and lysine 819 each coordinate Mo-bis(molybdopterin guanine dinucleotide).

Belongs to the prokaryotic molybdopterin-containing oxidoreductase family. NasA/NapA/NarB subfamily. As to quaternary structure, component of the periplasmic nitrate reductase NapAB complex composed of NapA and NapB. It depends on [4Fe-4S] cluster as a cofactor. Mo-bis(molybdopterin guanine dinucleotide) is required as a cofactor. Post-translationally, predicted to be exported by the Tat system. The position of the signal peptide cleavage has not been experimentally proven.

Its subcellular location is the periplasm. It catalyses the reaction 2 Fe(II)-[cytochrome] + nitrate + 2 H(+) = 2 Fe(III)-[cytochrome] + nitrite + H2O. Functionally, catalytic subunit of the periplasmic nitrate reductase complex NapAB. Receives electrons from NapB and catalyzes the reduction of nitrate to nitrite. This chain is Periplasmic nitrate reductase, found in Vibrio campbellii (strain ATCC BAA-1116).